The primary structure comprises 1484 residues: Cystic fibrosis transmembrane conductance regulator (1484 aa).

Topologically, residues 1–77 (MQRSPLEKAS…KLINALRRCF (77 aa)) are cytoplasmic. Residues 78–98 (FWRFMFYGIILYLGEVTKSVQ) form a helical membrane-spanning segment. An ABC transmembrane type-1 1 domain is found at 81-365 (FMFYGIILYL…WAVQTWYDSL (285 aa)). Residues 99 to 122 (PLLLGRIIASYDPDNKEERSIAIY) are Extracellular-facing. Residues 123-146 (LGIGLCLLFVMRTLLLHPAIFGLH) form a helical membrane-spanning segment. The Cytoplasmic segment spans residues 147–195 (RIGMQMRIAMFSLIYKKTLKLSSRVLDKISIGQLVSLLSNNLNKFDEGL). A helical membrane pass occupies residues 196–216 (ALAHFVWIAPLQVTLLMGLLW). Residues 217-222 (DLLQAS) are Extracellular-facing. The helical transmembrane segment at 223–243 (AFCGLAFLIVLALFQAGLGRM) threads the bilayer. Residues 244 to 298 (MMKYRDQRAGKINERLVITSEMIENIQSVKAYCWEEAMEKMIESIRQTELKLTRK) are Cytoplasmic-facing. Residues 299–319 (AAYVRYFNSSAFFFSGFFVVF) form a helical membrane-spanning segment. Residues 320–339 (LSVLPYALIKTIVLRKIFTT) are Extracellular-facing. The chain crosses the membrane as a helical span at residues 340–358 (ISFCIVLRMAVTRQFPWAV). At 359–860 (QTWYDSLGAI…YLRYVTIHKS (502 aa)) the chain is on the cytoplasmic side. ATP contacts are provided by residues W401, S434, 458–465 (GSTGAGKT), and Q493. In terms of domain architecture, ABC transporter 1 spans 423–646 (NADNSLFFSN…RPDFSSKLMG (224 aa)). C524 carries S-palmitoyl cysteine lipidation. Residues S549 and S660 each carry the phosphoserine modification. A disordered R region region spans residues 654–833 (SAERRNSIIT…EEINEEDLKE (180 aa)). A Phosphoserine; by PKA modification is found at S670. S686 bears the Phosphoserine mark. K688 is covalently cross-linked (Glycyl lysine isopeptide (Lys-Gly) (interchain with G-Cter in ubiquitin)). A phosphoserine mark is found at S700 and S712. The residue at position 717 (T717) is a Phosphothreonine. Residues S737, S769, S792, S797, and S815 each carry the phosphoserine modification. The chain crosses the membrane as a helical span at residues 861–881 (LVFVLIWCLVIFLAEVAISLV). The region spanning 861–1157 (LVFVLIWCLV…AVNSSIDVDS (297 aa)) is the ABC transmembrane type-1 2 domain. Residues 882-920 (VLWLLKKTASQDKGNSTQSINSSYTVIFTSTSTYYVFYI) are Extracellular-facing. N896 and N902 each carry an N-linked (GlcNAc...) asparagine glycan. A discontinuously helical membrane pass occupies residues 921–941 (YVGVADTLLALGFFRGLPLVH). The Cytoplasmic portion of the chain corresponds to 942–992 (TLITVSKILHHKMLHAVLQAPMSTLNALKAGGILNRFSKDIAILDDLLPLT). A helical transmembrane segment spans residues 993–1013 (IFDFVQLLLIVIGAVTVVSAL). Residues 1014–1015 (QP) are Extracellular-facing. Residues 1016 to 1036 (YIFLATVPVIAAFIMLRAYFL) form a helical membrane-spanning segment. At 1037 to 1097 (HTSQQLKQLE…TANWFLYLST (61 aa)) the chain is on the cytoplasmic side. The helical transmembrane segment at 1098–1118 (LRWFQMRMEIIFVIFFIAITF) threads the bilayer. Residues 1119 to 1132 (ISILTTGEGVGAVG) lie on the Extracellular side of the membrane. Residues 1133 to 1153 (IILTLAMNIMGTLQWAVNSSI) form a helical membrane-spanning segment. Residues 1154–1484 (DVDSLMRSVS…TEEEVQETRL (331 aa)) are Cytoplasmic-facing. The 234-residue stretch at 1214-1447 (MTVKDLTAKY…KSLFRQAISP (234 aa)) folds into the ABC transporter 2 domain. ATP-binding positions include Y1223 and 1248-1255 (GRTGSGKS). An interaction with GORASP2 region spans residues 1390-1484 (RTLKQAFADC…TEEEVQETRL (95 aa)). C1399 carries the S-palmitoyl cysteine lipid modification. Residues S1448 and S1460 each carry the phosphoserine modification. Over residues 1456–1465 (HRNSSKHKSR) the composition is skewed to basic residues. The interval 1456–1484 (HRNSSKHKSRSQIAALKEETEEEVQETRL) is disordered. The span at 1474-1484 (ETEEEVQETRL) shows a compositional bias: acidic residues. The PDZ-binding signature appears at 1482–1484 (TRL).

It belongs to the ABC transporter superfamily. ABCC family. CFTR transporter (TC 3.A.1.202) subfamily. In terms of assembly, monomer; does not require oligomerization for channel activity. May form oligomers in the membrane. Interacts with SLC26A3, SLC26A6 and NHERF1. Interacts with SHANK2. Interacts with MYO6. Interacts (via C-terminus) with GOPC (via PDZ domain); this promotes CFTR internalization and thereby decreases channel activity. Interacts with SLC4A7 through NHERF1. Found in a complex with MYO5B and RAB11A. Interacts with ANO1. Interacts with SLC26A8. Interacts with AHCYL1; the interaction increases CFTR activity. Interacts with CSE1L. The core-glycosylated form interacts with GORASP2 (via PDZ GRASP-type 1 domain) in respone to ER stress. Interacts with MARCHF2; the interaction leads to CFTR ubiqtuitination and degradation. Interacts with ADGRG2. N-glycosylated. Post-translationally, phosphorylated; cAMP treatment promotes phosphorylation and activates the channel. Dephosphorylation decreases the ATPase activity (in vitro). Phosphorylation at PKA sites activates the channel. Phosphorylation at PKC sites enhances the response to phosphorylation by PKA. Phosphorylated by AMPK; this inhibits channel activity. In terms of processing, ubiquitinated, leading to its degradation in the lysosome. Deubiquitination by USP10 in early endosomes enhances its endocytic recycling to the cell membrane. Ubiquitinated by RNF185 during ER stress. Ubiquitinated by MARCHF2.

Its subcellular location is the apical cell membrane. The protein localises to the early endosome membrane. It localises to the cell membrane. It is found in the recycling endosome membrane. The protein resides in the endoplasmic reticulum membrane. Its subcellular location is the nucleus. It catalyses the reaction ATP + H2O + closed Cl(-) channel = ADP + phosphate + open Cl(-) channel.. The enzyme catalyses chloride(in) = chloride(out). The catalysed reaction is hydrogencarbonate(in) = hydrogencarbonate(out). It carries out the reaction ATP + H2O = ADP + phosphate + H(+). In terms of biological role, epithelial ion channel that plays an important role in the regulation of epithelial ion and water transport and fluid homeostasis. Mediates the transport of chloride ions across the cell membrane. Possesses an intrinsic ATPase activity and utilizes ATP to gate its channel; the passive flow of anions through the channel is gated by cycles of ATP binding and hydrolysis by the ATP-binding domains. The ion channel is also permeable to HCO(3)(-); selectivity depends on the extracellular chloride concentration. Exerts its function also by modulating the activity of other ion channels and transporters. Contributes to the regulation of the pH and the ion content of the epithelial fluid layer. Modulates the activity of the epithelial sodium channel (ENaC) complex, in part by regulating the cell surface expression of the ENaC complex. May regulate bicarbonate secretion and salvage in epithelial cells by regulating the transporter SLC4A7. Can inhibit the chloride channel activity of ANO1. Plays a role in the chloride and bicarbonate homeostasis during sperm epididymal maturation and capacitation. This Mustela putorius furo (European domestic ferret) protein is Cystic fibrosis transmembrane conductance regulator.